The chain runs to 476 residues: Glycogen synthase (476 aa).

Lysine 15 contacts ADP-alpha-D-glucose.

Belongs to the glycosyltransferase 1 family. Bacterial/plant glycogen synthase subfamily.

The enzyme catalyses [(1-&gt;4)-alpha-D-glucosyl](n) + ADP-alpha-D-glucose = [(1-&gt;4)-alpha-D-glucosyl](n+1) + ADP + H(+). The protein operates within glycan biosynthesis; glycogen biosynthesis. In terms of biological role, synthesizes alpha-1,4-glucan chains using ADP-glucose. This chain is Glycogen synthase (glgA), found in Haemophilus influenzae (strain ATCC 51907 / DSM 11121 / KW20 / Rd).